The following is a 287-amino-acid chain: Putative daunorubicin C-13 ketoreductase DnrU (287 aa).

24 to 30 (GATSGIG) is an NADP(+) binding site. Ser-149 lines the substrate pocket. Tyr-175 functions as the Proton acceptor in the catalytic mechanism.

Belongs to the short-chain dehydrogenases/reductases (SDR) family.

Its function is as follows. Could reduce the 13-carbonyl of daunorubicin to produce (13S)-13-dihydrodaunorubicin. Could also be able to reduce the 13-carbonyl of doxorubicin. In Streptomyces sp. (strain C5), this protein is Putative daunorubicin C-13 ketoreductase DnrU.